Reading from the N-terminus, the 236-residue chain is NAD(P)H-hydrate epimerase (236 aa).

The YjeF N-terminal domain maps to 11–217 (AAALDQELMS…AIASKYGFEV (207 aa)). 61 to 65 (NNGGD) contacts (6S)-NADPHX. K(+) contacts are provided by asparagine 62 and aspartate 123. Residues 127–133 (GFSFSGE) and aspartate 156 contribute to the (6S)-NADPHX site. Serine 159 contributes to the K(+) binding site.

The protein belongs to the NnrE/AIBP family. Requires K(+) as cofactor.

It localises to the cytoplasm. Its subcellular location is the mitochondrion. The enzyme catalyses (6R)-NADHX = (6S)-NADHX. It catalyses the reaction (6R)-NADPHX = (6S)-NADPHX. In terms of biological role, catalyzes the epimerization of the S- and R-forms of NAD(P)HX, a damaged form of NAD(P)H that is a result of enzymatic or heat-dependent hydration. This is a prerequisite for the S-specific NAD(P)H-hydrate dehydratase to allow the repair of both epimers of NAD(P)HX. This is NAD(P)H-hydrate epimerase from Fusarium vanettenii (strain ATCC MYA-4622 / CBS 123669 / FGSC 9596 / NRRL 45880 / 77-13-4) (Fusarium solani subsp. pisi).